Reading from the N-terminus, the 156-residue chain is Small ribosomal subunit protein uS7 (156 aa).

It belongs to the universal ribosomal protein uS7 family. Part of the 30S ribosomal subunit. Contacts proteins S9 and S11.

Its function is as follows. One of the primary rRNA binding proteins, it binds directly to 16S rRNA where it nucleates assembly of the head domain of the 30S subunit. Is located at the subunit interface close to the decoding center, probably blocks exit of the E-site tRNA. This chain is Small ribosomal subunit protein uS7, found in Staphylococcus saprophyticus subsp. saprophyticus (strain ATCC 15305 / DSM 20229 / NCIMB 8711 / NCTC 7292 / S-41).